The chain runs to 449 residues: MQATDFKNKKVMVFGWARSGKAAAQLLTKLGSKVTVVNGGEFDAQDATYRSLLAADVTLIGTDNAETLDSTYDYLIKNPGINYDHPLVQKAEKLNIPILTEVEIALSTFNGRLIAVTGSNGKTTTTSLIRDMLKADGQNVITAGNIGVPVSEVVFDLTREDTLLLELSSFQLLGLPDIQPDIALVTNIFSNHLDYHKTRANYVAAKFRITRHQNANQYLVLNADGQDTEKFKNETEAQVLEFSRTKQHFPVAFSNGNLTLTDEIVMPTKDIKLVGPHNQENILAAVTVANLAGVSKPAIREVLKTFSGVAHRLQYLFTAGDVKYYNDSKATDIEATQTALDSFDCPTIWIGGGLERGDDLERLLPNLKNVKAVIAVGETQQKIVTLAREAGKPVIAVTDVEHAAPVAVQLASPGDVVLLSPAQASWDQYSSFEERGDNFVASLKETLNS.

118-124 (GSNGKTT) contributes to the ATP binding site.

The protein belongs to the MurCDEF family.

The protein resides in the cytoplasm. It catalyses the reaction UDP-N-acetyl-alpha-D-muramoyl-L-alanine + D-glutamate + ATP = UDP-N-acetyl-alpha-D-muramoyl-L-alanyl-D-glutamate + ADP + phosphate + H(+). It participates in cell wall biogenesis; peptidoglycan biosynthesis. Cell wall formation. Catalyzes the addition of glutamate to the nucleotide precursor UDP-N-acetylmuramoyl-L-alanine (UMA). The polypeptide is UDP-N-acetylmuramoylalanine--D-glutamate ligase (Leuconostoc mesenteroides subsp. mesenteroides (strain ATCC 8293 / DSM 20343 / BCRC 11652 / CCM 1803 / JCM 6124 / NCDO 523 / NBRC 100496 / NCIMB 8023 / NCTC 12954 / NRRL B-1118 / 37Y)).